A 221-amino-acid chain; its full sequence is Proline-rich protein 20A (221 aa).

Disordered regions lie at residues methionine 1 to glycine 103 and serine 137 to alanine 174. Residues proline 42–alanine 53 are compositionally biased toward low complexity. The span at proline 63–alanine 72 shows a compositional bias: pro residues. Over residues glycine 75–glycine 93 the composition is skewed to basic residues.

It belongs to the PRR20 family.

The sequence is that of Proline-rich protein 20A (PRR20A) from Homo sapiens (Human).